Consider the following 176-residue polypeptide: Disulfide bond formation protein B (176 aa).

Over Met1 to Ala14 the chain is Cytoplasmic. The helical transmembrane segment at Trp15–Tyr31 threads the bilayer. Residues Phe32 to Val49 are Periplasmic-facing. An intrachain disulfide couples Cys41 to Cys44. A helical membrane pass occupies residues Ala50–Pro65. The Cytoplasmic segment spans residues Arg66–Tyr71. The helical transmembrane segment at Leu72 to Trp89 threads the bilayer. Residues Ala90–Gln144 are Periplasmic-facing. A disulfide bridge connects residues Cys104 and Cys130. Residues Trp145–Ser163 form a helical membrane-spanning segment. The Cytoplasmic portion of the chain corresponds to Gln164–Arg176.

This sequence belongs to the DsbB family.

The protein resides in the cell inner membrane. In terms of biological role, required for disulfide bond formation in some periplasmic proteins. Acts by oxidizing the DsbA protein. The protein is Disulfide bond formation protein B of Yersinia pestis bv. Antiqua (strain Nepal516).